The sequence spans 121 residues: DNA-directed RNA polymerase subunit omega (121 aa).

This sequence belongs to the RNA polymerase subunit omega family. As to quaternary structure, the RNAP catalytic core consists of 2 alpha, 1 beta, 1 beta' and 1 omega subunit. When a sigma factor is associated with the core the holoenzyme is formed, which can initiate transcription.

The catalysed reaction is RNA(n) + a ribonucleoside 5'-triphosphate = RNA(n+1) + diphosphate. Promotes RNA polymerase assembly. Latches the N- and C-terminal regions of the beta' subunit thereby facilitating its interaction with the beta and alpha subunits. This is DNA-directed RNA polymerase subunit omega from Syntrophobacter fumaroxidans (strain DSM 10017 / MPOB).